Reading from the N-terminus, the 424-residue chain is CAAX prenyl protease 1 homolog (424 aa).

5 consecutive transmembrane segments (helical) span residues 3–23 (IPFM…ETYL), 67–87 (EFVT…PWFW), 109–129 (LSFL…FSLY), 155–175 (GTFL…FIVQ), and 185–205 (LWAF…VLIA). His284 contacts Zn(2+). Glu285 is a catalytic residue. Residue His288 coordinates Zn(2+). The next 2 helical transmembrane spans lie at 295–315 (TYSF…YTLV) and 332–352 (VLIG…LVSF). Residue Glu362 participates in Zn(2+) binding. Asp366 (proton donor) is an active-site residue.

This sequence belongs to the peptidase M48A family. Zn(2+) serves as cofactor. Expressed in leaves, stems and flowers.

The protein localises to the endoplasmic reticulum membrane. The catalysed reaction is Hydrolyzes the peptide bond -P2-(S-farnesyl or geranylgeranyl)C-P1'-P2'-P3'-COOH where P1' and P2' are amino acids with aliphatic side chains and P3' is any C-terminal residue.. In terms of biological role, proteolytically removes the C-terminal three residues of farnesylated proteins. The substrate specificity is only partially overlapping with that of FACE2. In Arabidopsis thaliana (Mouse-ear cress), this protein is CAAX prenyl protease 1 homolog (FACE1).